We begin with the raw amino-acid sequence, 234 residues long: DNA repair protein RecO (234 aa).

It belongs to the RecO family.

Its function is as follows. Involved in DNA repair and RecF pathway recombination. This chain is DNA repair protein RecO, found in Alteromonas mediterranea (strain DSM 17117 / CIP 110805 / LMG 28347 / Deep ecotype).